Here is a 121-residue protein sequence, read N- to C-terminus: Large ribosomal subunit protein uL14 (121 aa).

The protein belongs to the universal ribosomal protein uL14 family. In terms of assembly, part of the 50S ribosomal subunit. Forms a cluster with proteins L3 and L19. In the 70S ribosome, L14 and L19 interact and together make contacts with the 16S rRNA in bridges B5 and B8.

In terms of biological role, binds to 23S rRNA. Forms part of two intersubunit bridges in the 70S ribosome. The sequence is that of Large ribosomal subunit protein uL14 from Hydrogenobaculum sp. (strain Y04AAS1).